The sequence spans 285 residues: Protoheme IX farnesyltransferase (285 aa).

A run of 8 helical transmembrane segments spans residues 19–39 (RIIW…GKLM), 40–60 (PLSI…SMII), 90–110 (AIYV…LDNP), 111–131 (LTSF…TVWL), 135–155 (SPLN…AGYA), 165–185 (SILL…ALAL), 220–240 (IPFA…VAGI), and 265–285 (FKFS…TRLI).

It belongs to the UbiA prenyltransferase family. Protoheme IX farnesyltransferase subfamily.

It is found in the cell membrane. The enzyme catalyses heme b + (2E,6E)-farnesyl diphosphate + H2O = Fe(II)-heme o + diphosphate. It functions in the pathway porphyrin-containing compound metabolism; heme O biosynthesis; heme O from protoheme: step 1/1. In terms of biological role, converts heme B (protoheme IX) to heme O by substitution of the vinyl group on carbon 2 of heme B porphyrin ring with a hydroxyethyl farnesyl side group. In Metallosphaera sedula (strain ATCC 51363 / DSM 5348 / JCM 9185 / NBRC 15509 / TH2), this protein is Protoheme IX farnesyltransferase.